The following is a 267-amino-acid chain: ATP synthase subunit a (267 aa).

The next 5 helical transmembrane spans lie at tryptophan 38–tyrosine 58, isoleucine 98–isoleucine 118, asparagine 145–isoleucine 165, leucine 208–tryptophan 228, and alanine 238–valine 258.

This sequence belongs to the ATPase A chain family. F-type ATPases have 2 components, CF(1) - the catalytic core - and CF(0) - the membrane proton channel. CF(1) has five subunits: alpha(3), beta(3), gamma(1), delta(1), epsilon(1). CF(0) has three main subunits: a(1), b(2) and c(9-12). The alpha and beta chains form an alternating ring which encloses part of the gamma chain. CF(1) is attached to CF(0) by a central stalk formed by the gamma and epsilon chains, while a peripheral stalk is formed by the delta and b chains.

It is found in the cell inner membrane. Its function is as follows. Key component of the proton channel; it plays a direct role in the translocation of protons across the membrane. This chain is ATP synthase subunit a, found in Psychromonas ingrahamii (strain DSM 17664 / CCUG 51855 / 37).